Reading from the N-terminus, the 357-residue chain is Protein NDRG2 (357 aa).

The span at 1 to 14 shows a compositional bias: basic and acidic residues; the sequence is MAELREVQITEEKP. Positions 1 to 26 are disordered; that stretch reads MAELREVQITEEKPLLPGQTPEVAKT. At Ala-2 the chain carries N-acetylalanine. The residue at position 20 (Thr-20) is a Phosphothreonine. Residues Ser-312 and Ser-314 each carry the phosphoserine modification. Phosphothreonine is present on Thr-316. Position 318 is a phosphoserine (Ser-318). Position 320 is a phosphothreonine (Thr-320). A disordered region spans residues 320-357; that stretch reads TSAASIDGNRSRSRTLSQSSESGTLSSGPPGHTMEVSC. Phosphoserine is present on residues Ser-321, Ser-324, and Ser-330. Residues 333 to 347 show a composition bias toward low complexity; it reads RTLSQSSESGTLSSG. Thr-334 is subject to Phosphothreonine. A phosphoserine mark is found at Ser-336, Ser-338, Ser-339, and Ser-341. Position 343 is a phosphothreonine (Thr-343). Ser-356 is modified (phosphoserine).

The protein belongs to the NDRG family. Interacts with CTNNB1.

It localises to the cytoplasm. Its subcellular location is the perinuclear region. The protein resides in the cell projection. It is found in the growth cone. Its function is as follows. Contributes to the regulation of the Wnt signaling pathway. Down-regulates CTNNB1-mediated transcriptional activation of target genes, such as CCND1, and may thereby act as tumor suppressor. May be involved in dendritic cell and neuron differentiation. The chain is Protein NDRG2 (NDRG2) from Bos taurus (Bovine).